The sequence spans 548 residues: Mannosyltransferase APTG1 (548 aa).

The interval 1 to 23 (MDIRKRKNAGGDGDGGADGASVN) is disordered. A run of 3 helical transmembrane segments spans residues 41–61 (IFLFCLAFRVVNALLIQTYFN), 98–118 (LFAFLYKLLQVTGLDTPYIMI), and 146–166 (GNVATWSLFCQMANWFIFFCL). The N-linked (GlcNAc...) asparagine glycan is linked to Asn-167. 7 helical membrane passes run 169–189 (TFSNCLETVLTIMGLYYWPCI), 204–224 (LVIAALACAIRPTSAVIWLYV), 238–258 (FIILEVIPIGSLVLGFTCLLD), 260–280 (LMYGSWVIVPLNFLKFNFLSS), 294–314 (FTQGFLVMLFTFTPFSIAGII), 320–340 (KLSALILWVLAIYSILGHKEF), and 342–362 (FVLPVLPIALIFSGYAFAQME). Asn-382 carries an N-linked (GlcNAc...) asparagine glycan. Residues 392-412 (LSVYFLLATNIPMALYMSLFH) form a helical membrane-spanning segment. An N-linked (GlcNAc...) asparagine glycan is attached at Asn-490.

This sequence belongs to the glycosyltransferase 22 family. In terms of tissue distribution, mostly expressed, mainly in vascular tissues, in leaves, roots, stems, flowers, siliques and pollen, and, to a lower extent, in seedlings.

The protein localises to the endoplasmic reticulum membrane. Its function is as follows. Mannosyltransferase involved in glycosylphosphatidylinositol-anchor biosynthesis. Required for the pollen tube micropylar guidance and embryo development by regulating GPI-anchor mediated protein localization (e.g. COBL10 and A36). This chain is Mannosyltransferase APTG1, found in Arabidopsis thaliana (Mouse-ear cress).